We begin with the raw amino-acid sequence, 508 residues long: GMP synthase [glutamine-hydrolyzing] (508 aa).

The Glutamine amidotransferase type-1 domain occupies 1–189; that stretch reads MILVLDFGSQ…ALLVCDCEKT (189 aa). Cysteine 78 (nucleophile) is an active-site residue. Residues histidine 163 and glutamate 165 contribute to the active site. Residues 190-383 form the GMPS ATP-PPase domain; sequence WGMQHFAQRE…LGISQDFLMR (194 aa). Residue 217 to 223 coordinates ATP; sequence SGGVDST.

As to quaternary structure, homodimer.

The enzyme catalyses XMP + L-glutamine + ATP + H2O = GMP + L-glutamate + AMP + diphosphate + 2 H(+). It functions in the pathway purine metabolism; GMP biosynthesis; GMP from XMP (L-Gln route): step 1/1. Catalyzes the synthesis of GMP from XMP. This Helicobacter pylori (strain HPAG1) protein is GMP synthase [glutamine-hydrolyzing].